The primary structure comprises 180 residues: NADH-quinone oxidoreductase subunit I (180 aa).

4Fe-4S ferredoxin-type domains are found at residues 50 to 80 (LTRN…LQKS) and 90 to 119 (KFFR…LMPD). [4Fe-4S] cluster contacts are provided by Cys-60, Cys-63, Cys-66, Cys-70, Cys-99, Cys-102, Cys-105, and Cys-109.

It belongs to the complex I 23 kDa subunit family. In terms of assembly, NDH-1 is composed of 13 different subunits. Subunits NuoA, H, J, K, L, M, N constitute the membrane sector of the complex. Requires [4Fe-4S] cluster as cofactor.

The protein localises to the cell membrane. It carries out the reaction a quinone + NADH + 5 H(+)(in) = a quinol + NAD(+) + 4 H(+)(out). NDH-1 shuttles electrons from NADH, via FMN and iron-sulfur (Fe-S) centers, to quinones in the respiratory chain. The immediate electron acceptor for the enzyme in this species is believed to be ubiquinone. Couples the redox reaction to proton translocation (for every two electrons transferred, four hydrogen ions are translocated across the cytoplasmic membrane), and thus conserves the redox energy in a proton gradient. In Buchnera aphidicola subsp. Schizaphis graminum (strain Sg), this protein is NADH-quinone oxidoreductase subunit I.